The chain runs to 254 residues: 5'-nucleotidase SurE (254 aa).

The a divalent metal cation site is built by Asp-8, Asp-9, Ser-39, and Asn-97.

This sequence belongs to the SurE nucleotidase family. It depends on a divalent metal cation as a cofactor.

It localises to the cytoplasm. It catalyses the reaction a ribonucleoside 5'-phosphate + H2O = a ribonucleoside + phosphate. In terms of biological role, nucleotidase that shows phosphatase activity on nucleoside 5'-monophosphates. The polypeptide is 5'-nucleotidase SurE (Alkaliphilus metalliredigens (strain QYMF)).